A 732-amino-acid polypeptide reads, in one-letter code: Probable ATP-dependent RNA helicase DHX35 homolog (732 aa).

Residues 1-50 (MSYHPGHGHRQEPRKGAGARRGFARPDDSADAPRTGPLIFEERSTENAGA) are disordered. The Helicase ATP-binding domain maps to 87–251 (LYMCERYRTI…FEMNETGNSD (165 aa)). Residue 100–107 (GETGCGKS) coordinates ATP. A DEAH box motif is present at residues 198–201 (DEAH). In terms of domain architecture, Helicase C-terminal spans 283–457 (AVDTVINIHK…STILQLKALG (175 aa)).

Belongs to the DEAD box helicase family. DEAH subfamily.

It catalyses the reaction ATP + H2O = ADP + phosphate + H(+). The chain is Probable ATP-dependent RNA helicase DHX35 homolog from Caenorhabditis elegans.